Reading from the N-terminus, the 176-residue chain is Protein MAL2 (176 aa).

At 1-34 (MSAGGASVPPPPNPAVSFPPPRVTLPAGPDILRT) the chain is on the cytoplasmic side. The 145-residue stretch at 31-175 (ILRTYSGAFV…SLGLALRRWR (145 aa)) folds into the MARVEL domain. Residues 35-55 (YSGAFVCLEILFGGLVWILVA) form a helical membrane-spanning segment. Residues 56-66 (SSNVPLPLLQG) are Lumenal-facing. A helical membrane pass occupies residues 67-87 (WVMFVSVTAFFFSLLFLGMFL). Residues 88–102 (SGMVAQIDANWNFLD) lie on the Cytoplasmic side of the membrane. A helical transmembrane segment spans residues 103–123 (FAYHFTVFVFYFGAFLLEAAA). The Lumenal segment spans residues 124–149 (TSLHDLHCNTTITGQPLLSDNQYNIN). N132 carries N-linked (GlcNAc...) asparagine glycosylation. The helical transmembrane segment at 150–170 (VAASIFAFMTTACYGCSLGLA) threads the bilayer. At 171 to 176 (LRRWRP) the chain is on the cytoplasmic side.

This sequence belongs to the MAL family. As to quaternary structure, interacts with TPD52L2. As to expression, predominantly expressed in kidney, lung, and liver. Also found in thyroid gland, stomach and, at lower levels in testis and small intestine.

It is found in the cell membrane. Its subcellular location is the apical cell membrane. The protein localises to the endomembrane system. It localises to the cytoplasm. The protein resides in the perinuclear region. Its function is as follows. Member of the machinery of polarized transport. Required for the indirect transcytotic route at the step of the egress of the transcytosing cargo from perinuclear endosomes in order for it to travel to the apical surface via a raft-dependent pathway. This chain is Protein MAL2 (MAL2), found in Homo sapiens (Human).